The following is a 333-amino-acid chain: DNA-directed RNA polymerase subunit alpha (333 aa).

The alpha N-terminal domain (alpha-NTD) stretch occupies residues 1 to 234; the sequence is MQISVNEFLT…QQLAAFVDLK (234 aa). The tract at residues 248–333 is alpha C-terminal domain (alpha-CTD); the sequence is IDPILLRPVD…SLKKDDKATA (86 aa).

The protein belongs to the RNA polymerase alpha chain family. Homodimer. The RNAP catalytic core consists of 2 alpha, 1 beta, 1 beta' and 1 omega subunit. When a sigma factor is associated with the core the holoenzyme is formed, which can initiate transcription.

The catalysed reaction is RNA(n) + a ribonucleoside 5'-triphosphate = RNA(n+1) + diphosphate. In terms of biological role, DNA-dependent RNA polymerase catalyzes the transcription of DNA into RNA using the four ribonucleoside triphosphates as substrates. This Pseudomonas entomophila (strain L48) protein is DNA-directed RNA polymerase subunit alpha.